Reading from the N-terminus, the 608-residue chain is Protein Spindly (608 aa).

Position 1 is an N-acetylmethionine (Met1). Residues 1 to 445 are a coiled coil; that stretch reads MEADITNLRN…LKLKYEPEER (445 aa). A disordered region spans residues 465-487; it reads PEETEETAAASATEDGVSRLPPH. Ser516, Ser518, and Ser558 each carry phosphoserine.

This sequence belongs to the Spindly family. As to quaternary structure, interacts with KNTC1 and ZW10. These interactions appear weak and may be transient or indirect. Interacts with dynein intermediate chain and dynactin (DCTN1). Interacts with the catalytically active form of USP45. Monoubiquitinated with'Lys-48' linkage. Deubiquitinated by USP45.

It localises to the cytoplasm. Its subcellular location is the cytoskeleton. It is found in the microtubule organizing center. The protein resides in the centrosome. The protein localises to the chromosome. It localises to the centromere. Its subcellular location is the kinetochore. It is found in the nucleus. The protein resides in the spindle pole. Its function is as follows. Required for the localization of dynein and dynactin to the mitotic kintochore. Dynein is believed to control the initial lateral interaction between the kinetochore and spindle microtubules and to facilitate the subsequent formation of end-on kinetochore-microtubule attachments mediated by the NDC80 complex. Also required for correct spindle orientation. Does not appear to be required for the removal of spindle assembly checkpoint (SAC) proteins from the kinetochore upon bipolar spindle attachment. Acts as an adapter protein linking the dynein motor complex to various cargos and converts dynein from a non-processive to a highly processive motor in the presence of dynactin. Facilitates the interaction between dynein and dynactin and activates dynein processivity (the ability to move along a microtubule for a long distance without falling off the track). Plays a role in cell migration. In Mus musculus (Mouse), this protein is Protein Spindly (Spdl1).